The following is a 249-amino-acid chain: Proteasome subunit alpha type-3 (249 aa).

Belongs to the peptidase T1A family. The 26S proteasome consists of a 20S proteasome core and two 19S regulatory subunits. The 20S proteasome core is composed of 28 subunits that are arranged in four stacked rings, resulting in a barrel-shaped structure. The two end rings are each formed by seven alpha subunits, and the two central rings are each formed by seven beta subunits. The catalytic chamber with the active sites is on the inside of the barrel.

The protein localises to the cytoplasm. Its subcellular location is the nucleus. Its function is as follows. The proteasome is a multicatalytic proteinase complex which is characterized by its ability to cleave peptides with Arg, Phe, Tyr, Leu, and Glu adjacent to the leaving group at neutral or slightly basic pH. The proteasome has an ATP-dependent proteolytic activity. This chain is Proteasome subunit alpha type-3 (PAG1), found in Oryza sativa subsp. japonica (Rice).